Consider the following 1403-residue polypeptide: DNA-directed RNA polymerase subunit beta' (1403 aa).

4 residues coordinate Zn(2+): cysteine 70, cysteine 72, cysteine 85, and cysteine 88. Aspartate 460, aspartate 462, and aspartate 464 together coordinate Mg(2+). The Zn(2+) site is built by cysteine 814, cysteine 888, cysteine 895, and cysteine 898. The disordered stretch occupies residues 1369 to 1403 (RRKRRMLEQPESLTADTGTSHYGEDEISESGAATA). Polar residues predominate over residues 1379-1388 (ESLTADTGTS).

This sequence belongs to the RNA polymerase beta' chain family. In terms of assembly, the RNAP catalytic core consists of 2 alpha, 1 beta, 1 beta' and 1 omega subunit. When a sigma factor is associated with the core the holoenzyme is formed, which can initiate transcription. Requires Mg(2+) as cofactor. Zn(2+) serves as cofactor.

The catalysed reaction is RNA(n) + a ribonucleoside 5'-triphosphate = RNA(n+1) + diphosphate. Its function is as follows. DNA-dependent RNA polymerase catalyzes the transcription of DNA into RNA using the four ribonucleoside triphosphates as substrates. This Nitrosococcus oceani (strain ATCC 19707 / BCRC 17464 / JCM 30415 / NCIMB 11848 / C-107) protein is DNA-directed RNA polymerase subunit beta'.